The primary structure comprises 530 residues: Bifunctional purine biosynthesis protein PurH (530 aa).

The region spanning 1-148 is the MGS-like domain; the sequence is MNNPRPIRRA…KNHKDVTIVV (148 aa).

Belongs to the PurH family.

It carries out the reaction (6R)-10-formyltetrahydrofolate + 5-amino-1-(5-phospho-beta-D-ribosyl)imidazole-4-carboxamide = 5-formamido-1-(5-phospho-D-ribosyl)imidazole-4-carboxamide + (6S)-5,6,7,8-tetrahydrofolate. It catalyses the reaction IMP + H2O = 5-formamido-1-(5-phospho-D-ribosyl)imidazole-4-carboxamide. The protein operates within purine metabolism; IMP biosynthesis via de novo pathway; 5-formamido-1-(5-phospho-D-ribosyl)imidazole-4-carboxamide from 5-amino-1-(5-phospho-D-ribosyl)imidazole-4-carboxamide (10-formyl THF route): step 1/1. Its pathway is purine metabolism; IMP biosynthesis via de novo pathway; IMP from 5-formamido-1-(5-phospho-D-ribosyl)imidazole-4-carboxamide: step 1/1. The polypeptide is Bifunctional purine biosynthesis protein PurH (Aliivibrio salmonicida (strain LFI1238) (Vibrio salmonicida (strain LFI1238))).